The chain runs to 335 residues: Fructose-1,6-bisphosphatase class 1 (335 aa).

Positions 92, 114, 116, and 117 each coordinate Mg(2+). Substrate contacts are provided by residues 117–120 (DGSS) and Asn-209. Glu-281 contributes to the Mg(2+) binding site.

Belongs to the FBPase class 1 family. In terms of assembly, homotetramer. Requires Mg(2+) as cofactor.

The protein resides in the cytoplasm. It carries out the reaction beta-D-fructose 1,6-bisphosphate + H2O = beta-D-fructose 6-phosphate + phosphate. It participates in carbohydrate biosynthesis; gluconeogenesis. This Nitrosococcus oceani (strain ATCC 19707 / BCRC 17464 / JCM 30415 / NCIMB 11848 / C-107) protein is Fructose-1,6-bisphosphatase class 1.